The primary structure comprises 319 residues: N-acyl-aromatic-L-amino acid amidohydrolase (carboxylate-forming) (319 aa).

Residues methionine 1–asparagine 210 are hydrolytic domain. 2 residues coordinate Zn(2+): histidine 21 and glutamate 24. Substrate is bound by residues arginine 63 and asparagine 70 to arginine 71. Histidine 116 provides a ligand contact to Zn(2+). Glutamate 178 and tyrosine 288 together coordinate substrate. Residues glutamine 211–threonine 318 are shielding domain. At threonine 318 the chain carries Phosphothreonine.

This sequence belongs to the AspA/AstE family. Aspartoacylase subfamily. Exists as a mixture of homodimers and homotetramer, both catalytically active. It depends on Zn(2+) as a cofactor.

It is found in the apical cell membrane. It localises to the cytoplasm. The catalysed reaction is an N-acyl-aromatic L-alpha-amino acid + H2O = an aromatic L-alpha-amino acid + a carboxylate. It carries out the reaction an N-acetyl-L-cysteine-S-conjugate + H2O = an S-substituted L-cysteine + acetate. Plays an important role in deacetylating mercapturic acids in kidney proximal tubules. Also acts on N-acetyl-aromatic amino acids. The chain is N-acyl-aromatic-L-amino acid amidohydrolase (carboxylate-forming) (Acy3) from Rattus norvegicus (Rat).